The following is a 353-amino-acid chain: Holliday junction branch migration complex subunit RuvB (353 aa).

Residues 1-183 (MSGEGLVSAA…FGFTAHMDFY (183 aa)) form a large ATPase domain (RuvB-L) region. ATP-binding positions include L22, R23, G64, K67, T68, S69, 130 to 132 (EDF), R173, Y183, and R220. T68 serves as a coordination point for Mg(2+). The segment at 184 to 254 (DAAELALVLT…VARAALRIYD (71 aa)) is small ATPAse domain (RuvB-S). Residues 257–353 (ALGLDRLDRA…ALFGEDLPAS (97 aa)) are head domain (RuvB-H). Residues R312 and R317 each coordinate DNA.

It belongs to the RuvB family. In terms of assembly, homohexamer. Forms an RuvA(8)-RuvB(12)-Holliday junction (HJ) complex. HJ DNA is sandwiched between 2 RuvA tetramers; dsDNA enters through RuvA and exits via RuvB. An RuvB hexamer assembles on each DNA strand where it exits the tetramer. Each RuvB hexamer is contacted by two RuvA subunits (via domain III) on 2 adjacent RuvB subunits; this complex drives branch migration. In the full resolvosome a probable DNA-RuvA(4)-RuvB(12)-RuvC(2) complex forms which resolves the HJ.

It is found in the cytoplasm. It catalyses the reaction ATP + H2O = ADP + phosphate + H(+). Its function is as follows. The RuvA-RuvB-RuvC complex processes Holliday junction (HJ) DNA during genetic recombination and DNA repair, while the RuvA-RuvB complex plays an important role in the rescue of blocked DNA replication forks via replication fork reversal (RFR). RuvA specifically binds to HJ cruciform DNA, conferring on it an open structure. The RuvB hexamer acts as an ATP-dependent pump, pulling dsDNA into and through the RuvAB complex. RuvB forms 2 homohexamers on either side of HJ DNA bound by 1 or 2 RuvA tetramers; 4 subunits per hexamer contact DNA at a time. Coordinated motions by a converter formed by DNA-disengaged RuvB subunits stimulates ATP hydrolysis and nucleotide exchange. Immobilization of the converter enables RuvB to convert the ATP-contained energy into a lever motion, pulling 2 nucleotides of DNA out of the RuvA tetramer per ATP hydrolyzed, thus driving DNA branch migration. The RuvB motors rotate together with the DNA substrate, which together with the progressing nucleotide cycle form the mechanistic basis for DNA recombination by continuous HJ branch migration. Branch migration allows RuvC to scan DNA until it finds its consensus sequence, where it cleaves and resolves cruciform DNA. The chain is Holliday junction branch migration complex subunit RuvB from Parafrankia sp. (strain EAN1pec).